We begin with the raw amino-acid sequence, 288 residues long: Phenazine biosynthesis-like domain-containing protein 2 (288 aa).

The active site involves glutamate 46.

The protein belongs to the PhzF family.

The chain is Phenazine biosynthesis-like domain-containing protein 2 (Pbld2) from Mus musculus (Mouse).